Here is a 30-residue protein sequence, read N- to C-terminus: Circulin A (30 aa).

Positions 1 to 30 (GIPCGESCVWIPCISAALGCSCKNKVCYRN) form a cross-link, cyclopeptide (Gly-Asn). Cystine bridges form between Cys-4–Cys-20, Cys-8–Cys-22, and Cys-13–Cys-27.

Post-translationally, this is a cyclic peptide. As to expression, expressed in fruit, pedicel, root and stem but not in leaf (at protein level).

Functionally, probably participates in a plant defense mechanism. The protein is Circulin A of Chassalia chartacea (Chassalia curviflora).